The chain runs to 321 residues: Solute carrier family 25 member 33 (321 aa).

3 Solcar repeats span residues 9–118, 126–213, and 231–315; these read ENTL…AKEQ, NSNI…LKKY, and TSFF…IVYL. 6 consecutive transmembrane segments (helical) span residues 12 to 32, 49 to 65, 121 to 141, 190 to 210, 233 to 253, and 298 to 318; these read LLHLFAGGCGGTVGAIFTCPL, VYYPQVHLGTISGAGMV, GIFVPNSNIVHIFSAGSAAFI, LTASYAGISETIICFAIYESL, FFGLMAAAALSKGCASCIAYP, and QIPNTAIVLSTYELIVYLLED.

Belongs to the mitochondrial carrier (TC 2.A.29) family. In terms of tissue distribution, expressed in the central nervous system. Also expressed in testis and skeletal muscle. Weakly expressed in heart, liver, kidney, prostate, colon and peripheral blood leukocytes.

The protein localises to the mitochondrion inner membrane. The catalysed reaction is UTP(in) + UDP(out) = UTP(out) + UDP(in). The enzyme catalyses dUTP(out) + UTP(in) = dUTP(in) + UTP(out). It catalyses the reaction 5-methyl-UTP(out) + UTP(in) = 5-methyl-UTP(in) + UTP(out). It carries out the reaction 5-methyl-UDP(out) + UTP(in) = 5-methyl-UDP(in) + UTP(out). The catalysed reaction is UTP(in) + CTP(out) = UTP(out) + CTP(in). The enzyme catalyses CDP(out) + UTP(in) = CDP(in) + UTP(out). It catalyses the reaction dCTP(out) + UTP(in) = dCTP(in) + UTP(out). It carries out the reaction dCDP(out) + UTP(in) = dCDP(in) + UTP(out). The catalysed reaction is UTP(in) + GTP(out) = UTP(out) + GTP(in). The enzyme catalyses UTP(in) + GDP(out) = UTP(out) + GDP(in). It catalyses the reaction dGTP(out) + UTP(in) = dGTP(in) + UTP(out). It carries out the reaction dGDP(out) + UTP(in) = dGDP(in) + UTP(out). The catalysed reaction is ITP(out) + UTP(in) = ITP(in) + UTP(out). With respect to regulation, inhibited by pyridoxal 5'-phosphate, 4,7-diphenyl-1,10-phenanthroline, tannic acid, and mercurials (mercury dichloride, mersalyl acid, p-hydroxymercuribenzoate). In terms of biological role, mitochondrial transporter that imports/exports pyrimidine nucleotides into and from mitochondria. Selectively transports uridine, thymidine, guanosine, cytosine and inosine (deoxy)nucleoside di- and triphosphates by an antiport mechanism. May import (deoxy)nucleoside triphosphates in exchange for intramitochondrial (deoxy)nucleoside diphosphates, thus providing precursors necessary for de novo synthesis of mitochondrial DNA and RNA while exporting products of their catabolism. Participates in mitochondrial genome maintenance, regulation of mitochondrial membrane potential and mitochondrial respiration. Upon INS or IGF1 stimulation regulates cell growth and proliferation by controlling mitochondrial DNA replication and transcription, the ratio of mitochondria-to nuclear-encoded components of the electron transport chain resulting in control of mitochondrial ROS production. Participates in dendritic cell endocytosis and may associate with mitochondrial oxidative phosphorylation. The polypeptide is Solute carrier family 25 member 33 (SLC25A33) (Homo sapiens (Human)).